A 330-amino-acid polypeptide reads, in one-letter code: D-lactate dehydrogenase (330 aa).

NAD(+) is bound by residues 155-156 (RI), D175, 206-207 (MP), N212, 233-235 (MAR), and D259. The active site involves R235. E264 is a catalytic residue. H296 serves as the catalytic Proton donor.

This sequence belongs to the D-isomer specific 2-hydroxyacid dehydrogenase family.

It catalyses the reaction (R)-lactate + NAD(+) = pyruvate + NADH + H(+). The sequence is that of D-lactate dehydrogenase (ldhD) from Streptococcus pyogenes serotype M1.